We begin with the raw amino-acid sequence, 251 residues long: FHA domain-containing protein FHA1 (251 aa).

The FHA domain maps to 32–89 (IILGRNSKKSTVDVDLSSLGGGMNISRNHARIFYDFTRRRFSLEVLGKNGCFVEGVLH). The span at 163-174 (EYDDEDDDEEED) shows a compositional bias: acidic residues. The interval 163–209 (EYDDEDDDEEEDIRGSGKKTWRDGHEGVYASGEKKREGRSKADREAD) is disordered. A compositionally biased stretch (basic and acidic residues) spans 182 to 206 (TWRDGHEGVYASGEKKREGRSKADR).

Expressed in roots and vascular tissues near the shoot apex in young seedlings.

The protein localises to the nucleus. Its function is as follows. May play a role in the control of plant organ development. Does not show transactivation activity in yeast. This Arabidopsis thaliana (Mouse-ear cress) protein is FHA domain-containing protein FHA1.